The following is a 319-amino-acid chain: Ribonuclease Z (319 aa).

The Zn(2+) site is built by histidine 62, histidine 64, aspartate 66, histidine 67, histidine 145, aspartate 215, and histidine 273. The active-site Proton acceptor is aspartate 66.

The protein belongs to the RNase Z family. As to quaternary structure, homodimer. Zn(2+) serves as cofactor.

The enzyme catalyses Endonucleolytic cleavage of RNA, removing extra 3' nucleotides from tRNA precursor, generating 3' termini of tRNAs. A 3'-hydroxy group is left at the tRNA terminus and a 5'-phosphoryl group is left at the trailer molecule.. Zinc phosphodiesterase, which displays some tRNA 3'-processing endonuclease activity. Probably involved in tRNA maturation, by removing a 3'-trailer from precursor tRNA. The sequence is that of Ribonuclease Z from Borreliella burgdorferi (strain ATCC 35210 / DSM 4680 / CIP 102532 / B31) (Borrelia burgdorferi).